We begin with the raw amino-acid sequence, 264 residues long: Glutamate racemase (264 aa).

Substrate-binding positions include 10–11 (DS) and 42–43 (YG). Cys73 serves as the catalytic Proton donor/acceptor. 74 to 75 (NT) lines the substrate pocket. Residue Cys183 is the Proton donor/acceptor of the active site. Position 184 to 185 (184 to 185 (TH)) interacts with substrate.

Belongs to the aspartate/glutamate racemases family.

It catalyses the reaction L-glutamate = D-glutamate. It participates in cell wall biogenesis; peptidoglycan biosynthesis. Its function is as follows. Provides the (R)-glutamate required for cell wall biosynthesis. This is Glutamate racemase from Streptococcus pneumoniae (strain ATCC BAA-255 / R6).